Here is a 289-residue protein sequence, read N- to C-terminus: Ribosomal RNA small subunit methyltransferase A (289 aa).

Residues asparagine 28, leucine 30, glycine 55, glutamate 76, aspartate 101, and asparagine 125 each contribute to the S-adenosyl-L-methionine site.

Belongs to the class I-like SAM-binding methyltransferase superfamily. rRNA adenine N(6)-methyltransferase family. RsmA subfamily.

The protein resides in the cytoplasm. It catalyses the reaction adenosine(1518)/adenosine(1519) in 16S rRNA + 4 S-adenosyl-L-methionine = N(6)-dimethyladenosine(1518)/N(6)-dimethyladenosine(1519) in 16S rRNA + 4 S-adenosyl-L-homocysteine + 4 H(+). In terms of biological role, specifically dimethylates two adjacent adenosines (A1518 and A1519) in the loop of a conserved hairpin near the 3'-end of 16S rRNA in the 30S particle. May play a critical role in biogenesis of 30S subunits. The polypeptide is Ribosomal RNA small subunit methyltransferase A (Clostridioides difficile (strain 630) (Peptoclostridium difficile)).